Consider the following 250-residue polypeptide: Sulfate transporter CysZ (250 aa).

The next 4 helical transmembrane spans lie at 27 to 47, 64 to 84, 150 to 170, and 210 to 230; these read FVVL…YYLF, FLSW…LATF, FLLL…WFLF, and MLVA…PVAV.

The protein belongs to the CysZ family.

It localises to the cell inner membrane. Functionally, high affinity, high specificity proton-dependent sulfate transporter, which mediates sulfate uptake. Provides the sulfur source for the cysteine synthesis pathway. The polypeptide is Sulfate transporter CysZ (Vibrio cholerae serotype O1 (strain ATCC 39315 / El Tor Inaba N16961)).